Reading from the N-terminus, the 237-residue chain is Thiamine-phosphate synthase (237 aa).

4-amino-2-methyl-5-(diphosphooxymethyl)pyrimidine is bound by residues 41–45 and Asn-73; that span reads QLRDK. Residues Asp-74 and Asp-93 each coordinate Mg(2+). Residue Ser-112 participates in 4-amino-2-methyl-5-(diphosphooxymethyl)pyrimidine binding. Residue 143-145 participates in 2-[(2R,5Z)-2-carboxy-4-methylthiazol-5(2H)-ylidene]ethyl phosphate binding; sequence TPT. 4-amino-2-methyl-5-(diphosphooxymethyl)pyrimidine is bound at residue Lys-146. A 2-[(2R,5Z)-2-carboxy-4-methylthiazol-5(2H)-ylidene]ethyl phosphate-binding site is contributed by Gly-192.

Belongs to the thiamine-phosphate synthase family. Requires Mg(2+) as cofactor.

The catalysed reaction is 2-[(2R,5Z)-2-carboxy-4-methylthiazol-5(2H)-ylidene]ethyl phosphate + 4-amino-2-methyl-5-(diphosphooxymethyl)pyrimidine + 2 H(+) = thiamine phosphate + CO2 + diphosphate. It catalyses the reaction 2-(2-carboxy-4-methylthiazol-5-yl)ethyl phosphate + 4-amino-2-methyl-5-(diphosphooxymethyl)pyrimidine + 2 H(+) = thiamine phosphate + CO2 + diphosphate. It carries out the reaction 4-methyl-5-(2-phosphooxyethyl)-thiazole + 4-amino-2-methyl-5-(diphosphooxymethyl)pyrimidine + H(+) = thiamine phosphate + diphosphate. The protein operates within cofactor biosynthesis; thiamine diphosphate biosynthesis; thiamine phosphate from 4-amino-2-methyl-5-diphosphomethylpyrimidine and 4-methyl-5-(2-phosphoethyl)-thiazole: step 1/1. Its function is as follows. Condenses 4-methyl-5-(beta-hydroxyethyl)thiazole monophosphate (THZ-P) and 2-methyl-4-amino-5-hydroxymethyl pyrimidine pyrophosphate (HMP-PP) to form thiamine monophosphate (TMP). This is Thiamine-phosphate synthase from Arthrobacter sp. (strain FB24).